The chain runs to 658 residues: Palmitoyltransferase ZDHHC5-B (658 aa).

The Cytoplasmic portion of the chain corresponds to Met1 to Arg24. Residues Tyr25–Phe45 traverse the membrane as a helical segment. The Extracellular portion of the chain corresponds to Thr46 to Ser56. A helical transmembrane segment spans residues Phe57–Thr77. Over Phe78–Tyr159 the chain is Cytoplasmic. Positions Lys115 to Leu165 constitute a DHHC domain. Catalysis depends on Cys145, which acts as the S-palmitoyl cysteine intermediate. Residues Phe160–Leu180 form a helical membrane-spanning segment. Topologically, residues Tyr181–Cys202 are extracellular. The chain crosses the membrane as a helical span at residues Val203–Ala223. At Arg224 to Val658 the chain is on the cytoplasmic side. Disordered stretches follow at residues Glu306–Ser419, Glu490–Ala522, and Gln540–Val658. Positions Pro360–Pro398 are enriched in polar residues. Residues Gly407–Ser419 show a composition bias toward gly residues. Residues Ser565 to Ser575 show a composition bias toward pro residues. The segment covering Ser619 to Asn633 has biased composition (polar residues). Over residues Thr634 to Lys644 the composition is skewed to basic residues.

This sequence belongs to the DHHC palmitoyltransferase family. ERF2/ZDHHC9 subfamily.

Its subcellular location is the cell membrane. It carries out the reaction L-cysteinyl-[protein] + hexadecanoyl-CoA = S-hexadecanoyl-L-cysteinyl-[protein] + CoA. Its function is as follows. Palmitoyltransferase that catalyzes the addition of palmitate onto various protein substrates and is involved in a variety of cellular processes. The protein is Palmitoyltransferase ZDHHC5-B of Danio rerio (Zebrafish).